The primary structure comprises 254 residues: 5-oxoprolinase subunit A (254 aa).

It belongs to the LamB/PxpA family. As to quaternary structure, forms a complex composed of PxpA, PxpB and PxpC.

The enzyme catalyses 5-oxo-L-proline + ATP + 2 H2O = L-glutamate + ADP + phosphate + H(+). Catalyzes the cleavage of 5-oxoproline to form L-glutamate coupled to the hydrolysis of ATP to ADP and inorganic phosphate. The chain is 5-oxoprolinase subunit A from Acinetobacter baumannii (strain ATCC 17978 / DSM 105126 / CIP 53.77 / LMG 1025 / NCDC KC755 / 5377).